Consider the following 302-residue polypeptide: Cyclin-dependent kinase 1-B (302 aa).

Residues 4-287 enclose the Protein kinase domain; the sequence is YTKIEKIGEG…ARKAMLHPYF (284 aa). ATP-binding positions include 10–18 and Lys33; that span reads IGEGTYGVV. Phosphothreonine is present on Thr14. Tyr15 bears the Phosphotyrosine; by wee1 and wee2 mark. Residue Asp128 is the Proton acceptor of the active site. At Thr161 the chain carries Phosphothreonine; by cak. Ser277 carries the post-translational modification Phosphoserine.

It belongs to the protein kinase superfamily. CMGC Ser/Thr protein kinase family. CDC2/CDKX subfamily. Forms a stable but non-covalent complex with a regulatory subunit and with a cyclin. Interacts with spdya. In terms of processing, phosphorylation at Tyr-15 by wee1 and wee2 inhibits the protein kinase activity and acts negative regulator of entry into mitosis (G2 to M transition).

The protein resides in the nucleus. It catalyses the reaction L-seryl-[protein] + ATP = O-phospho-L-seryl-[protein] + ADP + H(+). The catalysed reaction is L-threonyl-[protein] + ATP = O-phospho-L-threonyl-[protein] + ADP + H(+). The enzyme catalyses [DNA-directed RNA polymerase] + ATP = phospho-[DNA-directed RNA polymerase] + ADP + H(+). Phosphorylation at Thr-14 or Tyr-15 inactivates the enzyme, while phosphorylation at Thr-161 activates it. Plays a key role in the control of the eukaryotic cell cycle by modulating the centrosome cycle as well as mitotic onset; promotes G2-M transition via association with multiple interphase cyclins. During G2 and early mitosis, CDC25A/B/C-mediated dephosphorylation activates CDK1/cyclin complexes which phosphorylate several substrates that trigger at least centrosome separation, Golgi dynamics, nuclear envelope breakdown and chromosome condensation. Once chromosomes are condensed and aligned at the metaphase plate, CDK1 activity is switched off by WEE1- and PKMYT1-mediated phosphorylation to allow sister chromatid separation, chromosome decondensation, reformation of the nuclear envelope and cytokinesis. Catalyzes lamin (LMNA, LMNB1 and LMNB2) phosphorylation at the onset of mitosis, promoting nuclear envelope breakdown. The polypeptide is Cyclin-dependent kinase 1-B (cdk1-b) (Xenopus laevis (African clawed frog)).